The chain runs to 177 residues: Peroxiredoxin-2 (177 aa).

Ala2 bears the N-acetylalanine mark. Residues 6–164 (ARIGKPAPDF…ALRLVQAFQY (159 aa)) form the Thioredoxin domain. The active-site Cysteine sulfenic acid (-SOH) intermediate is Cys51. At Ser112 the chain carries Phosphoserine.

Belongs to the peroxiredoxin family. AhpC/Prx1 subfamily. Homodimer; disulfide-linked, upon oxidation. 5 homodimers assemble to form a ring-like decamer. Interacts with TIPIN. Post-translationally, the enzyme can be inactivated by further oxidation of the cysteine sulfenic acid (C(P)-SOH) to sulphinic acid (C(P)-SO2H) instead of its condensation to a disulfide bond. It can be reactivated by forming a transient disulfide bond with sulfiredoxin SRXN1, which reduces the cysteine sulfinic acid in an ATP- and Mg-dependent manner. In terms of processing, acetylation increases resistance to transition to high molecular-mass complexes. Deacetylated by HDAC6 which decreases reducing activity.

The protein resides in the cytoplasm. The enzyme catalyses a hydroperoxide + [thioredoxin]-dithiol = an alcohol + [thioredoxin]-disulfide + H2O. In terms of biological role, thiol-specific peroxidase that catalyzes the reduction of hydrogen peroxide and organic hydroperoxides to water and alcohols, respectively. Plays a role in cell protection against oxidative stress by detoxifying peroxides and as sensor of hydrogen peroxide-mediated signaling events. Might participate in the signaling cascades of growth factors and tumor necrosis factor-alpha by regulating the intracellular concentrations of H(2)O(2). The polypeptide is Peroxiredoxin-2 (PRDX2) (Pongo abelii (Sumatran orangutan)).